Here is a 164-residue protein sequence, read N- to C-terminus: MMKEFSSTAQGNTEVIHTGTLQRHESHHIRDFCFQEIEKDIHNFEFQWQEEERNGHEAPMTEIKELTGSTDRHDQRHAGNKPIKDQLGSSFHSHLPELHIFQPEWKIGNQVEKSIINASLILTSQRISCSPKTRISNNYGNNSLHSSLPIQKLGSTHERKIFPM.

The sequence is that of Putative protein ZNF321 (ZNF321P) from Homo sapiens (Human).